The following is a 289-amino-acid chain: ATP synthase gamma chain (289 aa).

The protein belongs to the ATPase gamma chain family. In terms of assembly, F-type ATPases have 2 components, CF(1) - the catalytic core - and CF(0) - the membrane proton channel. CF(1) has five subunits: alpha(3), beta(3), gamma(1), delta(1), epsilon(1). CF(0) has three main subunits: a, b and c.

The protein localises to the cell membrane. Produces ATP from ADP in the presence of a proton gradient across the membrane. The gamma chain is believed to be important in regulating ATPase activity and the flow of protons through the CF(0) complex. In Lactococcus lactis subsp. lactis (strain IL1403) (Streptococcus lactis), this protein is ATP synthase gamma chain.